We begin with the raw amino-acid sequence, 500 residues long: L-arabinose isomerase (500 aa).

The Mn(2+) site is built by E306, E333, H350, and H450.

Belongs to the arabinose isomerase family. In terms of assembly, homohexamer. Requires Mn(2+) as cofactor.

The catalysed reaction is beta-L-arabinopyranose = L-ribulose. It functions in the pathway carbohydrate degradation; L-arabinose degradation via L-ribulose; D-xylulose 5-phosphate from L-arabinose (bacterial route): step 1/3. Catalyzes the conversion of L-arabinose to L-ribulose. The sequence is that of L-arabinose isomerase from Yersinia pestis bv. Antiqua (strain Nepal516).